Here is a 121-residue protein sequence, read N- to C-terminus: Large ribosomal subunit protein bL12 (121 aa).

This sequence belongs to the bacterial ribosomal protein bL12 family. Homodimer. Part of the ribosomal stalk of the 50S ribosomal subunit. Forms a multimeric L10(L12)X complex, where L10 forms an elongated spine to which 2 to 4 L12 dimers bind in a sequential fashion. Binds GTP-bound translation factors.

Forms part of the ribosomal stalk which helps the ribosome interact with GTP-bound translation factors. Is thus essential for accurate translation. In Streptococcus suis (strain 98HAH33), this protein is Large ribosomal subunit protein bL12.